We begin with the raw amino-acid sequence, 555 residues long: Probable terpene synthase 6 (555 aa).

Residues D309, D313, and E460 each contribute to the Mg(2+) site. Positions 309 to 313 (DDTYD) match the DDXXD motif motif.

It belongs to the terpene synthase family. Mg(2+) is required as a cofactor.

Probable sesquiterpene synthase. This is Probable terpene synthase 6 (TPS6) from Ricinus communis (Castor bean).